An 877-amino-acid polypeptide reads, in one-letter code: Alanine--tRNA ligase (877 aa).

Zn(2+)-binding residues include His-566, His-570, Cys-668, and His-672.

This sequence belongs to the class-II aminoacyl-tRNA synthetase family. The cofactor is Zn(2+).

The protein localises to the cytoplasm. It carries out the reaction tRNA(Ala) + L-alanine + ATP = L-alanyl-tRNA(Ala) + AMP + diphosphate. Catalyzes the attachment of alanine to tRNA(Ala) in a two-step reaction: alanine is first activated by ATP to form Ala-AMP and then transferred to the acceptor end of tRNA(Ala). Also edits incorrectly charged Ser-tRNA(Ala) and Gly-tRNA(Ala) via its editing domain. This chain is Alanine--tRNA ligase, found in Staphylococcus aureus (strain USA300 / TCH1516).